The chain runs to 415 residues: Gamma-glutamyl phosphate reductase (415 aa).

Belongs to the gamma-glutamyl phosphate reductase family.

Its subcellular location is the cytoplasm. It catalyses the reaction L-glutamate 5-semialdehyde + phosphate + NADP(+) = L-glutamyl 5-phosphate + NADPH + H(+). It functions in the pathway amino-acid biosynthesis; L-proline biosynthesis; L-glutamate 5-semialdehyde from L-glutamate: step 2/2. Its function is as follows. Catalyzes the NADPH-dependent reduction of L-glutamate 5-phosphate into L-glutamate 5-semialdehyde and phosphate. The product spontaneously undergoes cyclization to form 1-pyrroline-5-carboxylate. The chain is Gamma-glutamyl phosphate reductase from Psychromonas ingrahamii (strain DSM 17664 / CCUG 51855 / 37).